Consider the following 100-residue polypeptide: NADH-quinone oxidoreductase subunit K (100 aa).

The next 3 helical transmembrane spans lie at 4-24 (VTWYLWLAAMLFTIGLSGVLL), 29-49 (LIVMMSVELMLNAANLTFLAF), and 61-81 (IAFFVIAVAAAEAAVGLAVVI).

Belongs to the complex I subunit 4L family. In terms of assembly, NDH-1 is composed of 14 different subunits. Subunits NuoA, H, J, K, L, M, N constitute the membrane sector of the complex.

Its subcellular location is the cell inner membrane. It catalyses the reaction a quinone + NADH + 5 H(+)(in) = a quinol + NAD(+) + 4 H(+)(out). NDH-1 shuttles electrons from NADH, via FMN and iron-sulfur (Fe-S) centers, to quinones in the respiratory chain. The immediate electron acceptor for the enzyme in this species is believed to be ubiquinone. Couples the redox reaction to proton translocation (for every two electrons transferred, four hydrogen ions are translocated across the cytoplasmic membrane), and thus conserves the redox energy in a proton gradient. This chain is NADH-quinone oxidoreductase subunit K, found in Anaeromyxobacter sp. (strain Fw109-5).